Here is a 381-residue protein sequence, read N- to C-terminus: MRCFSCLNTQTNDMRINIDTLSDLTDYASVATKIDPRGTGSKSGILVNGKVNSPKPGGGARSFTFKELAAATKNFREGNIIGKGGFGSVYKGRLDSGQVVAIKQLNPDGHQGNQEFIVEVCMLSVFHHPNLVTLIGYCTSGAQRLLVYEYMPMGSLEDHLFDLEPDQTPLSWYTRMKIAVGAARGIEYLHCKISPSVIYRDLKSANILLDKEFSVKLSDFGLAKVGPVGNRTHVSTRVMGTYGYCAPEYAMSGRLTIKSDIYSFGVVLLELISGRKAIDLSKPNGEQYLVAWARPYLKDPKKFGLLVDPLLRGKFSKRCLNYAISITEMCLNDEANHRPKIGDVVVAFEYIASQSKSYEDRRTARKSTDSNRLRRETKQSY.

A lipid anchor (S-palmitoyl cysteine) is attached at cysteine 3. At threonine 64 the chain carries Phosphothreonine. In terms of domain architecture, Protein kinase spans 75–351; sequence FREGNIIGKG…GDVVVAFEYI (277 aa). Residues 81 to 89 and lysine 103 each bind ATP; that span reads IGKGGFGSV. Tyrosine 148 bears the Phosphotyrosine mark. The active-site Proton acceptor is the aspartate 201. Residue serine 235 is modified to Phosphoserine. Phosphothreonine occurs at positions 236 and 241. Tyrosine 249 is modified (phosphotyrosine). The disordered stretch occupies residues 361–381; it reads RRTARKSTDSNRLRRETKQSY.

It belongs to the protein kinase superfamily. Ser/Thr protein kinase family. In terms of processing, palmitoylation at Cys-3 and Cys-6 are required for plasma membrane location.

The protein resides in the cell membrane. It catalyses the reaction L-seryl-[protein] + ATP = O-phospho-L-seryl-[protein] + ADP + H(+). The enzyme catalyses L-threonyl-[protein] + ATP = O-phospho-L-threonyl-[protein] + ADP + H(+). Its function is as follows. May be involved in plant defense signaling. In Arabidopsis thaliana (Mouse-ear cress), this protein is Probable serine/threonine-protein kinase PBL22.